The chain runs to 264 residues: [LysW]-aminoadipate/[LysW]-glutamate kinase (264 aa).

Substrate is bound by residues 35–36, arginine 62, and asparagine 167; that span reads GG.

The protein belongs to the acetylglutamate kinase family. LysZ subfamily.

Its subcellular location is the cytoplasm. It catalyses the reaction [amino-group carrier protein]-C-terminal-N-(1,4-dicarboxybutan-1-yl)-L-glutamine + ATP = [amino-group carrier protein]-C-terminal-N-(1-carboxy-5-phosphooxy-5-oxopentan-1-yl)-L-glutamine + ADP. The catalysed reaction is [amino-group carrier protein]-C-terminal-gamma-(L-glutamyl)-L-glutamate + ATP = [amino-group carrier protein]-C-terminal-gamma-(5-phospho-L-glutamyl)-L-glutamate + ADP. Its pathway is amino-acid biosynthesis; L-lysine biosynthesis via AAA pathway; L-lysine from L-alpha-aminoadipate (Thermus route): step 2/5. It functions in the pathway amino-acid biosynthesis; L-arginine biosynthesis. Functionally, involved in both the arginine and lysine biosynthetic pathways. Phosphorylates the LysW-bound precursors glutamate (for arginine biosynthesis), respectively alpha-aminoadipate (for lysine biosynthesis). The polypeptide is [LysW]-aminoadipate/[LysW]-glutamate kinase (Saccharolobus islandicus (strain L.S.2.15 / Lassen #1) (Sulfolobus islandicus)).